Reading from the N-terminus, the 141-residue chain is MLMPKRTKYRKQMKGRNRGKSFRGANLAFGDIGIKAIEHGRIDSRQIESARIAMTRHIKRAGKVWIRVFPDKPLTAKPLETRMGKGKGGVEKWVMNIKPGRLIYEMAGIDEALAREALALAQSKLPFKTKIITSESENEIY.

The interval 1-20 is disordered; that stretch reads MLMPKRTKYRKQMKGRNRGK.

The protein belongs to the universal ribosomal protein uL16 family. Part of the 50S ribosomal subunit.

Binds 23S rRNA and is also seen to make contacts with the A and possibly P site tRNAs. The protein is Large ribosomal subunit protein uL16 of Helicobacter hepaticus (strain ATCC 51449 / 3B1).